The following is a 233-amino-acid chain: Orotidine 5'-phosphate decarboxylase (233 aa).

Substrate contacts are provided by residues D9, K31, 58–67 (DLKLHDIPNT), T120, R182, Q191, G211, and R212. The Proton donor role is filled by K60.

Belongs to the OMP decarboxylase family. Type 1 subfamily. In terms of assembly, homodimer.

The catalysed reaction is orotidine 5'-phosphate + H(+) = UMP + CO2. It participates in pyrimidine metabolism; UMP biosynthesis via de novo pathway; UMP from orotate: step 2/2. In terms of biological role, catalyzes the decarboxylation of orotidine 5'-monophosphate (OMP) to uridine 5'-monophosphate (UMP). The sequence is that of Orotidine 5'-phosphate decarboxylase from Listeria innocua serovar 6a (strain ATCC BAA-680 / CLIP 11262).